Consider the following 668-residue polypeptide: Biosynthetic arginine decarboxylase (668 aa).

Lysine 105 carries the post-translational modification N6-(pyridoxal phosphate)lysine. 286-296 (LDVGGGLGVDY) is a substrate binding site.

This sequence belongs to the Orn/Lys/Arg decarboxylase class-II family. SpeA subfamily. Mg(2+) is required as a cofactor. Requires pyridoxal 5'-phosphate as cofactor.

It catalyses the reaction L-arginine + H(+) = agmatine + CO2. Functionally, catalyzes the biosynthesis of agmatine from arginine. The sequence is that of Biosynthetic arginine decarboxylase from Rhodopirellula baltica (strain DSM 10527 / NCIMB 13988 / SH1).